The following is a 241-amino-acid chain: 2,3,4,5-tetrahydropyridine-2,6-dicarboxylate N-acetyltransferase (241 aa).

It belongs to the transferase hexapeptide repeat family. DapH subfamily.

It catalyses the reaction (S)-2,3,4,5-tetrahydrodipicolinate + acetyl-CoA + H2O = L-2-acetamido-6-oxoheptanedioate + CoA. The protein operates within amino-acid biosynthesis; L-lysine biosynthesis via DAP pathway; LL-2,6-diaminopimelate from (S)-tetrahydrodipicolinate (acetylase route): step 1/3. Functionally, catalyzes the transfer of an acetyl group from acetyl-CoA to tetrahydrodipicolinate. The chain is 2,3,4,5-tetrahydropyridine-2,6-dicarboxylate N-acetyltransferase from Thermoanaerobacter pseudethanolicus (strain ATCC 33223 / 39E) (Clostridium thermohydrosulfuricum).